Here is a 261-residue protein sequence, read N- to C-terminus: Undecaprenyl-diphosphatase (261 aa).

7 helical membrane-spanning segments follow: residues 38–58 (RSDF…TFVF), 75–95 (RDYV…GLAV), 106–126 (IQPI…AESV), 136–156 (VTWS…VFPG), 181–201 (FSFL…CFEL), 217–237 (VAFV…LGYI), and 241–261 (SFAP…TWLT).

This sequence belongs to the UppP family.

The protein resides in the cell inner membrane. It catalyses the reaction di-trans,octa-cis-undecaprenyl diphosphate + H2O = di-trans,octa-cis-undecaprenyl phosphate + phosphate + H(+). Functionally, catalyzes the dephosphorylation of undecaprenyl diphosphate (UPP). Confers resistance to bacitracin. This chain is Undecaprenyl-diphosphatase, found in Xylella fastidiosa (strain Temecula1 / ATCC 700964).